Reading from the N-terminus, the 356-residue chain is sn-glycerol-3-phosphate import ATP-binding protein UgpC (356 aa).

Positions 4–235 (LKLQAVTKSW…PASLFVASFI (232 aa)) constitute an ABC transporter domain. Residue 37–44 (GPSGCGKS) coordinates ATP.

This sequence belongs to the ABC transporter superfamily. sn-glycerol-3-phosphate importer (TC 3.A.1.1.3) family. The complex is composed of two ATP-binding proteins (UgpC), two transmembrane proteins (UgpA and UgpE) and a solute-binding protein (UgpB).

Its subcellular location is the cell inner membrane. It carries out the reaction sn-glycerol 3-phosphate(out) + ATP + H2O = sn-glycerol 3-phosphate(in) + ADP + phosphate + H(+). Its function is as follows. Part of the ABC transporter complex UgpBAEC involved in sn-glycerol-3-phosphate (G3P) import. Responsible for energy coupling to the transport system. The sequence is that of sn-glycerol-3-phosphate import ATP-binding protein UgpC from Shigella sonnei (strain Ss046).